The chain runs to 267 residues: X-box-binding protein 1 (267 aa).

At 1-180 (MVVVAAAPSA…VQAQLSPPQN (180 aa)) the chain is on the cytoplasmic side. A disordered region spans residues 35–56 (VPGPRAAGSEASGTPQARKRQR). Position 61 is a phosphoserine (Ser-61). In terms of domain architecture, bZIP spans 63 to 126 (EEKALRRKLK…HGLVVENQEL (64 aa)). The interval 65-87 (KALRRKLKNRVAAQTARDRKKAR) is basic motif. Residues 69-85 (RKLKNRVAAQTARDRKK) form a nuclear localization signal (NLS) region. The tract at residues 91-126 (LEQQVVDLEEENHKLQLENQLLREKTHGLVVENQEL) is leucine-zipper. The chain crosses the membrane as a helical; Signal-anchor for type II membrane protein span at residues 181–198 (IFPWTLTLLPLQILSLIS). At 199-267 (FWAFWTSWTL…FVLTMYTPSL (69 aa)) the chain is on the lumenal side. Residues 230–256 (QKDLVPYQPPFLCQWGPHQPSWKPLMN) form a necessary for the translational pausing of its own mRNA region.

The protein belongs to the bZIP family. In terms of assembly, isoform 1 interacts with HM13. Isoform 1 interacts with RNF139; the interaction induces ubiquitination and degradation of isoform 1. Isoform 1 interacts (via luminal domain) with DERL1; the interaction obviates the need for ectodomain shedding prior HM13/SPP-mediated XBP1 isoform 1 cleavage. Isoform 1 interacts with isoform 2; the interaction sequesters isoform 2 from the nucleus and enhances isoform 2 degradation in the cytoplasm. Isoform 1 interacts with HDAC3 and AKT1; the interactions occur in endothelial cell (EC) under disturbed flow. Isoform 1 interacts with the oncoprotein FOS. Isoform 2 interacts with ATF6; the interaction occurs in a ER stress-dependent manner and is required for DNA binding to the unfolded protein response element (UPRE). Isoform 2 interacts with PIK3R1; the interaction is direct and induces translocation of XBP1 isoform 2 into the nucleus and the unfolded protein response (UPR) XBP1-dependent target genes activation in a ER stress- and/or insulin-dependent but PI3K-independent manner. Isoform 2 interacts with SIRT1. Isoform 2 interacts with PIK3R1 and PIK3R2; the interactions are direct and induce translocation of XBP1 isoform 2 into the nucleus and the unfolded protein response (UPR) XBP1-dependent target genes activation in a ER stress- and/or insulin-dependent but PI3K-independent manner. Isoform 2 interacts with FOXO1; the interaction is direct and leads to FOXO1 ubiquitination and degradation via the proteasome pathway in hepatocytes. Post-translationally, acetylated by EP300; acetylation positively regulates the transcriptional activity of XBP1 isoform 2. Isoform 2 is deacetylated by SIRT1; deacetylation negatively regulates the transcriptional activity of XBP1 isoform 2. Ubiquitinated, leading to proteasomal degradation in response to ER stress. In terms of processing, X-box-binding protein 1, cytoplasmic form and luminal form are produced by intramembrane proteolytic cleavage of ER membrane-anchored isoform 1 triggered by HM13/SPP in a DERL1-RNF139-dependent and VCP/p97-independent manner. X-box-binding protein 1, luminal form is ubiquitinated leading to proteasomal degradation. Isoform 1 and isoform 2 are expressed at higher level in branch curves of vessel walls and in atherosclerotic plaques relative to healthy segments of the same aortas (at protein level). Expressed in skeletal muscles, plasma cells and pancreatic beta cells. Isoform 1 and isoform 2 are expressed in gonadal adipose tissue. Isoform 1 is expressed in inguinal adipose tissue.

Its subcellular location is the endoplasmic reticulum. It is found in the nucleus. It localises to the cytoplasm. The protein localises to the endoplasmic reticulum membrane. The protein resides in the membrane. In terms of biological role, functions as a transcription factor during endoplasmic reticulum stress by regulating the unfolded protein response (UPR). Required for cardiac myogenesis and hepatogenesis during embryonic development and the development of secretory tissues such as exocrine pancreas and salivary gland. Involved in differentiation of B lymphocytes to plasma cells and production of immunoglobulins. Modulates the cellular response to ER stress in a PIK3R-dependent manner. Binds to the cis-acting X box present in the promoter regions of major histocompatibility complex class II genes. Involved in VEGF-induced endothelial cell (EC) proliferation and retinal blood vessel formation during embryonic development but also for angiogenesis in adult tissues under ischemic conditions. Also functions as a major regulator of the UPR in obesity-induced insulin resistance and type 2 diabetes for the management of obesity and diabetes prevention. Its function is as follows. Plays a role in the unconventional cytoplasmic splicing processing of its own mRNA triggered by the endoplasmic reticulum (ER) transmembrane endoribonuclease ERN1: upon ER stress, the emerging XBP1 polypeptide chain, as part of a mRNA-ribosome-nascent chain (R-RNC) complex, cotranslationally recruits its own unprocessed mRNA through transient docking to the ER membrane and translational pausing, therefore facilitating efficient IRE1-mediated XBP1 mRNA isoform 2 production. In endothelial cells (EC), associated with KDR, promotes IRE1-mediated XBP1 mRNA isoform 2 production in a vascular endothelial growth factor (VEGF)-dependent manner, leading to EC proliferation and angiogenesis. Functions as a negative feed-back regulator of the potent transcription factor XBP1 isoform 2 protein levels through proteasome-mediated degradation, thus preventing the constitutive activation of the ER stress response signaling pathway. Inhibits the transactivation activity of XBP1 isoform 2 in myeloma cells. Acts as a weak transcriptional factor. Together with HDAC3, contributes to the activation of NFE2L2-mediated HMOX1 transcription factor gene expression in a PI(3)K/mTORC2/Akt-dependent signaling pathway leading to EC survival under disturbed flow/oxidative stress. Binds to the ER stress response element (ERSE) upon ER stress. Binds to the consensus 5'-GATGACGTG[TG]N(3)[AT]T-3' sequence related to cAMP responsive element (CRE)-like sequences. Binds the Tax-responsive element (TRE) present in the long terminal repeat (LTR) of T-cell leukemia virus type 1 (HTLV-I) and to the TPA response elements (TRE). Associates preferentially to the HDAC3 gene promoter region in a static flow-dependent manner. Binds to the CDH5/VE-cadherin gene promoter region. Functions as a stress-inducible potent transcriptional activator during endoplasmic reticulum (ER) stress by inducing unfolded protein response (UPR) target genes via binding to the UPR element (UPRE). Up-regulates target genes encoding ER chaperones and ER-associated degradation (ERAD) components to enhance the capacity of productive folding and degradation mechanism, respectively, in order to maintain the homeostasis of the ER under ER stress. Plays a role in the production of immunoglobulins and interleukin-6 in the presence of stimuli required for plasma cell differentiation, and promotes as well membrane phospholipid biosynthesis necessary for ER expansion. Contributes to the VEGF-induced endothelial cell (EC) growth and proliferation in a Akt/GSK-dependent and/or -independent signaling pathway, respectively, leading to beta-catenin nuclear translocation and E2F2 gene expression. Promotes umbilical vein EC apoptosis and atherosclerotisis development in a caspase-dependent signaling pathway, and contributes to VEGF-induced EC proliferation and angiogenesis in adult tissues under ischemic conditions. Involved in the regulation of endostatin-induced autophagy in EC through BECN1 transcriptional activation. Plays a role as an oncogene by promoting tumor progression: stimulates zinc finger protein SNAI1 transcription to induce epithelial-to-mesenchymal (EMT) transition, cell migration and invasion of breast cancer cells. Involved in adipocyte differentiation by regulating lipogenic gene expression during lactation. Plays a role in the survival of both dopaminergic neurons of the substantia nigra pars compacta (SNpc), by maintaining protein homeostasis and of myeloma cells. Increases insulin sensitivity in the liver as a response to a high carbohydrate diet, resulting in improved glucose tolerance. Also improves glucose homeostasis in an ER stress- and/or insulin-independent manner through both binding and proteasome-induced degradation of the transcription factor FOXO1, hence resulting in suppression of gluconeogenic genes expression and in a reduction of blood glucose levels. Controls the induction of de novo fatty acid synthesis in hepatocytes by regulating the expression of a subset of lipogenic genes in an ER stress- and UPR-independent manner. Binds to the 5'-CCACG-3' motif in the PPARG promoter. Associates preferentially to the HDAC3 gene promoter region in a disturbed flow-dependent manner. Binds to the BECN1 gene promoter region. Binds to the CDH5/VE-cadherin gene promoter region. Binds to the ER stress response element (ERSE) upon ER stress. This is X-box-binding protein 1 from Mus musculus (Mouse).